Consider the following 349-residue polypeptide: MVTYKDAGVDIYKEDKVIRALASQIKFERTDAIKPADLKGHYAGAIEFGDYYLVLCTDGVGSKMVVAEMANKFDTVPIDMIAMNVNDAICIGAEPVALVDYMAVEDITEDIASQIGKGLNDGIKESNINLIGGETASLPNMIKGVDLAGTVLAVVKKDEIVSGKEVKSGDLIVGLRSSGIHSNGLSLARKVFFDIANLDVNSKLSHGKTVAEELLTPTKIYVKPVLEMIKQVNVKGLAHITGGGFRKLKRLNKEVCYKIDELPEILPIFKEMQKLGNVADEEMFKTFNMGIGFCVIVEKEDAEKIIEISNHHNIPAFVIGKIEDSVEVNGETKKETVLVEYNNKKMIME.

The protein belongs to the AIR synthase family.

Its subcellular location is the cytoplasm. It carries out the reaction 2-formamido-N(1)-(5-O-phospho-beta-D-ribosyl)acetamidine + ATP = 5-amino-1-(5-phospho-beta-D-ribosyl)imidazole + ADP + phosphate + H(+). It functions in the pathway purine metabolism; IMP biosynthesis via de novo pathway; 5-amino-1-(5-phospho-D-ribosyl)imidazole from N(2)-formyl-N(1)-(5-phospho-D-ribosyl)glycinamide: step 2/2. This chain is Phosphoribosylformylglycinamidine cyclo-ligase, found in Methanococcus maripaludis (strain DSM 14266 / JCM 13030 / NBRC 101832 / S2 / LL).